A 121-amino-acid polypeptide reads, in one-letter code: Putative iron-sulfur cluster insertion protein ErpA 1 (121 aa).

Iron-sulfur cluster contacts are provided by Cys-49, Cys-113, and Cys-115.

This sequence belongs to the HesB/IscA family. As to quaternary structure, homodimer. It depends on iron-sulfur cluster as a cofactor.

Required for insertion of 4Fe-4S clusters. The polypeptide is Putative iron-sulfur cluster insertion protein ErpA 1 (Polaromonas naphthalenivorans (strain CJ2)).